The sequence spans 400 residues: Pectinesterase B (400 aa).

Substrate contacts are provided by T171 and Q205. Catalysis depends on D228, which acts as the Proton donor. Residue D261 is the Nucleophile of the active site. 2 residues coordinate substrate: R325 and W327.

It belongs to the pectinesterase family.

The enzyme catalyses [(1-&gt;4)-alpha-D-galacturonosyl methyl ester](n) + n H2O = [(1-&gt;4)-alpha-D-galacturonosyl](n) + n methanol + n H(+). Its pathway is glycan metabolism; pectin degradation; 2-dehydro-3-deoxy-D-gluconate from pectin: step 1/5. This chain is Pectinesterase B (pemB), found in Pectobacterium parmentieri.